The following is a 520-amino-acid chain: Sodium-dependent dicarboxylate transporter SdcS (520 aa).

The next 14 membrane-spanning stretches (helical) occupy residues 30-50 (AGQL…LLFF), 55-75 (LPWK…WWIT), 77-97 (AIPI…GHIL), 104-124 (SEYG…AIAM), 160-180 (SMFV…LAII), 207-227 (IGYA…PLII), 242-262 (FAKW…ITWL), 298-318 (KVVQ…EFLL), 323-343 (VTSS…LFII), 362-382 (ELPW…KGIS), 399-419 (GVSP…LTEV), 428-448 (MILP…LLLM), 452-472 (AMAA…AIIF), and 491-511 (LISA…VLGI).

The protein belongs to the SLC13A/DASS transporter (TC 2.A.47) family. NADC subfamily.

It is found in the cell membrane. In terms of biological role, mediates the transport of the dicarboxylates fumarate, malate, and succinate across the cytoplasmic membrane via a Na(+)-electrochemical gradient. The chain is Sodium-dependent dicarboxylate transporter SdcS (sdcS) from Staphylococcus aureus (strain USA300).